The chain runs to 339 residues: UDP-glucose 4-epimerase (339 aa).

NAD(+) contacts are provided by residues 12-13 (FI), 32-37 (DNLCNS), 59-60 (DI), 81-85 (FAGLK), Asn-100, Ser-125, Tyr-150, Lys-154, and Phe-179. Substrate-binding residues include Ser-125 and Tyr-150. The active-site Proton acceptor is the Tyr-150. Residues Asn-180, 200 to 201 (NL), 217 to 219 (AVF), Arg-232, and 293 to 296 (RAGD) contribute to the substrate site.

Belongs to the NAD(P)-dependent epimerase/dehydratase family. As to quaternary structure, homodimer. It depends on NAD(+) as a cofactor.

It carries out the reaction UDP-alpha-D-glucose = UDP-alpha-D-galactose. The protein operates within carbohydrate metabolism; galactose metabolism. Its function is as follows. Involved in the metabolism of galactose. Plays an essential role in the incorporation of galactose into meningococcal lipopolysaccharide surface molecules, which are important for pathogenesis. Catalyzes the conversion of UDP-galactose (UDP-Gal) to UDP-glucose (UDP-Glc) through a mechanism involving the transient reduction of NAD. The polypeptide is UDP-glucose 4-epimerase (galE) (Neisseria meningitidis serogroup B (strain ATCC BAA-335 / MC58)).